The sequence spans 1032 residues: uncharacterized protein (1032 aa).

3 disordered regions span residues 54 to 80, 391 to 451, and 884 to 934; these read NNNN…NNNN, QLQI…QTHL, and INNE…SKVK. Low complexity predominate over residues 884 to 907; that stretch reads INNENNNENNNNYNGNINSNNNNN.

This is an uncharacterized protein from Dictyostelium discoideum (Social amoeba).